Reading from the N-terminus, the 179-residue chain is Inorganic pyrophosphatase (179 aa).

Substrate is bound by residues Lys-30, Arg-44, and Tyr-56. Mg(2+) contacts are provided by Asp-66, Asp-71, and Asp-103. Residue Tyr-143 coordinates substrate.

It belongs to the PPase family. As to quaternary structure, homohexamer. Requires Mg(2+) as cofactor.

The protein resides in the cytoplasm. It catalyses the reaction diphosphate + H2O = 2 phosphate + H(+). In terms of biological role, catalyzes the hydrolysis of inorganic pyrophosphate (PPi) forming two phosphate ions. The sequence is that of Inorganic pyrophosphatase from Wigglesworthia glossinidia brevipalpis.